Consider the following 198-residue polypeptide: dCTP deaminase (198 aa).

Residues 99-104, 125-127, and Gln-144 contribute to the dCTP site; these read RSSLGR and TLE. The active-site Proton donor/acceptor is the Glu-127.

Belongs to the dCTP deaminase family. As to quaternary structure, homotrimer.

The catalysed reaction is dCTP + H2O + H(+) = dUTP + NH4(+). It participates in pyrimidine metabolism; dUMP biosynthesis; dUMP from dCTP (dUTP route): step 1/2. Its function is as follows. Catalyzes the deamination of dCTP to dUTP. The polypeptide is dCTP deaminase (Rhodopirellula baltica (strain DSM 10527 / NCIMB 13988 / SH1)).